We begin with the raw amino-acid sequence, 145 residues long: Putative nickel-responsive regulator (145 aa).

Ni(2+) contacts are provided by His77, His88, His90, and Cys96.

The protein belongs to the transcriptional regulatory CopG/NikR family. The cofactor is Ni(2+).

Its function is as follows. Transcriptional regulator. This chain is Putative nickel-responsive regulator, found in Rhizobium rhizogenes (strain K84 / ATCC BAA-868) (Agrobacterium radiobacter).